The sequence spans 307 residues: uncharacterized protein (307 aa).

This is an uncharacterized protein from Acidianus hospitalis (AFV-1).